The sequence spans 422 residues: RNA exonuclease 4 (422 aa).

Residues 1–194 (MGKAKVPASK…APAPPTEEDI (194 aa)) are disordered. Position 15 is a phosphoserine (S15). Residues 26–40 (LTRKKNKKKKRFWKS) are compositionally biased toward basic residues. Phosphoserine occurs at positions 96 and 111. 2 stretches are compositionally biased toward basic and acidic residues: residues 106–127 (NKKE…DQEA) and 151–176 (GTEH…DIEH). A Glycyl lysine isopeptide (Lys-Gly) (interchain with G-Cter in SUMO2) cross-link involves residue K115. The 152-residue stretch at 243–394 (ALALDCEMVG…QDAQAAMRLY (152 aa)) folds into the Exonuclease domain.

Belongs to the REXO4 family. As to quaternary structure, can bind ESR1 and ESR2. This interaction is abrogated by estrogen and augmented by tamoxifen treatment.

The protein resides in the nucleus. It is found in the nucleolus. The chain is RNA exonuclease 4 (REXO4) from Homo sapiens (Human).